Here is a 372-residue protein sequence, read N- to C-terminus: Glutamate 5-kinase (372 aa).

Lys6 is an ATP binding site. Substrate contacts are provided by Ser46, Asp133, and Asn145. ATP-binding positions include 165 to 166 (TD) and 207 to 213 (TGGMYTK). In terms of domain architecture, PUA spans 272 to 350 (SGRLFIDEGA…HEIEKILGYK (79 aa)).

It belongs to the glutamate 5-kinase family.

It is found in the cytoplasm. The enzyme catalyses L-glutamate + ATP = L-glutamyl 5-phosphate + ADP. It functions in the pathway amino-acid biosynthesis; L-proline biosynthesis; L-glutamate 5-semialdehyde from L-glutamate: step 1/2. In terms of biological role, catalyzes the transfer of a phosphate group to glutamate to form L-glutamate 5-phosphate. The sequence is that of Glutamate 5-kinase from Thermoanaerobacter pseudethanolicus (strain ATCC 33223 / 39E) (Clostridium thermohydrosulfuricum).